Consider the following 1191-residue polypeptide: Puratrophin-1 (1191 aa).

2 disordered regions span residues 1–152 (MERP…DPVG) and 707–728 (AGGG…SDPR). Residue Ser64 is modified to Phosphoserine. Positions 111 to 120 (SHLSLAQGES) are enriched in polar residues. A DH domain is found at 732-908 (RLQLVLAEMV…HFQLRHGNDL (177 aa)). One can recognise a PH domain in the interval 920–1027 (NLKEQGQLVR…WTADISHLLW (108 aa)). A disordered region spans residues 1150–1176 (SLTAEDSEISSQCPSASGSSGSDSSCV). Positions 1159–1176 (SSQCPSASGSSGSDSSCV) are enriched in low complexity.

As to expression, expressed in kidney, Leydig cells in the testis, epithelial cells in the prostate gland and Langerhans islet in the pancreas. Isoform 1 and isoform 3 are strongly expressed in Purkinje cells and to a lower extent in other neurons (at protein level). Widely expressed at low levels. More strongly expressed in testis and pancreas.

Its function is as follows. Possible role in intracellular signaling and cytoskeleton dynamics at the Golgi. The chain is Puratrophin-1 (PLEKHG4) from Homo sapiens (Human).